A 208-amino-acid chain; its full sequence is MIGRLHGTVAERHPPALLLDVGGVGYELEAPMSTFYALPAGDQAVTLWTHLAVRDDGQALYGFASRAERDLFRVLIRISGVGPKLALALLSGMNAEGLQRCIEREDVATLTRLPGVGRKTAQRLIVELRDRLDGLLPAASGGVPARTGSGEQLDAPAGPQGSREDAVSALVALGYKPAEAGRLVNAVPGANDLPSEELIRRALQAAVR.

The domain I stretch occupies residues 1-64 (MIGRLHGTVA…DDGQALYGFA (64 aa)). Positions 65-143 (SRAERDLFRV…GLLPAASGGV (79 aa)) are domain II. Residues 139 to 162 (ASGGVPARTGSGEQLDAPAGPQGS) form a disordered region. The tract at residues 144–157 (PARTGSGEQLDAPA) is flexible linker. Residues 158–208 (GPQGSREDAVSALVALGYKPAEAGRLVNAVPGANDLPSEELIRRALQAAVR) are domain III.

Belongs to the RuvA family. In terms of assembly, homotetramer. Forms an RuvA(8)-RuvB(12)-Holliday junction (HJ) complex. HJ DNA is sandwiched between 2 RuvA tetramers; dsDNA enters through RuvA and exits via RuvB. An RuvB hexamer assembles on each DNA strand where it exits the tetramer. Each RuvB hexamer is contacted by two RuvA subunits (via domain III) on 2 adjacent RuvB subunits; this complex drives branch migration. In the full resolvosome a probable DNA-RuvA(4)-RuvB(12)-RuvC(2) complex forms which resolves the HJ.

The protein localises to the cytoplasm. The RuvA-RuvB-RuvC complex processes Holliday junction (HJ) DNA during genetic recombination and DNA repair, while the RuvA-RuvB complex plays an important role in the rescue of blocked DNA replication forks via replication fork reversal (RFR). RuvA specifically binds to HJ cruciform DNA, conferring on it an open structure. The RuvB hexamer acts as an ATP-dependent pump, pulling dsDNA into and through the RuvAB complex. HJ branch migration allows RuvC to scan DNA until it finds its consensus sequence, where it cleaves and resolves the cruciform DNA. In Alkalilimnicola ehrlichii (strain ATCC BAA-1101 / DSM 17681 / MLHE-1), this protein is Holliday junction branch migration complex subunit RuvA.